The following is a 434-amino-acid chain: MNIIVVGLSHKTAAVEIREKVAFSPTQMEKPLHALVSIPDITEGVIVSTCNRVEIYATTRDIAGGIARLKRFLADYHNFPLETLEPHLYSYHGEAATRHVFRVASSLDSMVVGEPQILGQIKTSYGYAAEYKSSGIILNRFLHKAFSVAKRVRTETKIASSAVSVAFAAVELAKKIFGDLSDKTVMLIGAGEMCELAAKHFINTGVRGVMVTNRTFERAVKLAEEFDGKAVNYEDLFDQLHKADIILSSTGAPHFIIKPKDIEDVIRRRKLKPMFFIDIAVPRDIDPKVNDIENIYLYTVDDLNGVVATNLEQRKKESEKAEAIVEQEIGQFFKWLSSLEVTPTIVALRSKFDEIRRAELAKTMANWKDLPPEGEKRLEALTNAIMNKLLHQPTSVLKRSDQGNRNDLYVDALRNLFDLETAPHEEMELGELEE.

Substrate is bound by residues 49 to 52, S109, 114 to 116, and Q120; these read TCNR and EPQ. The active-site Nucleophile is C50. 189–194 provides a ligand contact to NADP(+); sequence GAGEMC.

This sequence belongs to the glutamyl-tRNA reductase family. In terms of assembly, homodimer.

It catalyses the reaction (S)-4-amino-5-oxopentanoate + tRNA(Glu) + NADP(+) = L-glutamyl-tRNA(Glu) + NADPH + H(+). It participates in porphyrin-containing compound metabolism; protoporphyrin-IX biosynthesis; 5-aminolevulinate from L-glutamyl-tRNA(Glu): step 1/2. In terms of biological role, catalyzes the NADPH-dependent reduction of glutamyl-tRNA(Glu) to glutamate 1-semialdehyde (GSA). The sequence is that of Glutamyl-tRNA reductase from Geotalea daltonii (strain DSM 22248 / JCM 15807 / FRC-32) (Geobacter daltonii).